We begin with the raw amino-acid sequence, 346 residues long: Small ribosomal subunit biogenesis GTPase RsgA (346 aa).

The 164-residue stretch at 98–261 (VQGGRGPQLA…VIDTPGMRTL (164 aa)) folds into the CP-type G domain. Residues 148 to 151 (TKAD) and 200 to 208 (GSSGVGKST) each bind GTP. The Zn(2+) site is built by C284, C289, H291, and C297. Residues 317–346 (RKLSDENQHNTPVQSGPRGAKSPAGRGKRR) are disordered.

Belongs to the TRAFAC class YlqF/YawG GTPase family. RsgA subfamily. In terms of assembly, monomer. Associates with 30S ribosomal subunit, binds 16S rRNA. It depends on Zn(2+) as a cofactor.

It is found in the cytoplasm. Functionally, one of several proteins that assist in the late maturation steps of the functional core of the 30S ribosomal subunit. Helps release RbfA from mature subunits. May play a role in the assembly of ribosomal proteins into the subunit. Circularly permuted GTPase that catalyzes slow GTP hydrolysis, GTPase activity is stimulated by the 30S ribosomal subunit. This chain is Small ribosomal subunit biogenesis GTPase RsgA, found in Mesorhizobium japonicum (strain LMG 29417 / CECT 9101 / MAFF 303099) (Mesorhizobium loti (strain MAFF 303099)).